The primary structure comprises 157 residues: Transcriptional repressor NrdR (157 aa).

Residues 3–34 (CPKCNSTHSRVVDSRHADEANAIRRRRECENC) fold into a zinc finger. The ATP-cone domain maps to 49-139 (LIVVKKDGTR…VYKEFKDVDQ (91 aa)).

This sequence belongs to the NrdR family. The cofactor is Zn(2+).

Functionally, negatively regulates transcription of bacterial ribonucleotide reductase nrd genes and operons by binding to NrdR-boxes. The sequence is that of Transcriptional repressor NrdR from Staphylococcus carnosus (strain TM300).